Here is a 120-residue protein sequence, read N- to C-terminus: UPF0091 protein PH1455 (120 aa).

The protein belongs to the UPF0091 family.

This chain is UPF0091 protein PH1455, found in Pyrococcus horikoshii (strain ATCC 700860 / DSM 12428 / JCM 9974 / NBRC 100139 / OT-3).